Here is a 238-residue protein sequence, read N- to C-terminus: MTPDEFLSALTDFDIKLSDKQIEQFERYFELLVEWNEKINLTAITEKNEVYLKHFYDSVAPILYGLITDQPVSILDIGAGAGFPSLPMKIIFPELEVTIIDSLNKRINFLSLLTEELGLENVTLLHGRAEDFGQDSNYRATFDFVTARAVARLSVLSEFTIPFLKKNGNLLSLKAAQFEEELTDAKKAIAILGGKFIKEIAYELPNGDERHIAVIEKKKETPKKYPRKAGTPAKSPIK.

Residues glycine 78, phenylalanine 83, 129 to 130, and arginine 148 contribute to the S-adenosyl-L-methionine site; that span reads AE. The disordered stretch occupies residues 217-238; the sequence is KKKETPKKYPRKAGTPAKSPIK.

The protein belongs to the methyltransferase superfamily. RNA methyltransferase RsmG family.

It is found in the cytoplasm. Functionally, specifically methylates the N7 position of a guanine in 16S rRNA. This Lactococcus lactis subsp. cremoris (strain MG1363) protein is Ribosomal RNA small subunit methyltransferase G.